Here is a 196-residue protein sequence, read N- to C-terminus: Carnitine operon protein CaiE (196 aa).

A disordered region spans residues 173-196 (TQPLRQMEENRPRLQGTTDVTPKR). Residues 187-196 (QGTTDVTPKR) show a composition bias toward polar residues.

This sequence belongs to the transferase hexapeptide repeat family.

The protein operates within amine and polyamine metabolism; carnitine metabolism. Overproduction of CaiE stimulates the activity of CaiB and CaiD. This chain is Carnitine operon protein CaiE, found in Shigella flexneri serotype 5b (strain 8401).